The chain runs to 464 residues: ATP synthase subunit beta (464 aa).

151-158 lines the ATP pocket; sequence GGAGVGKT.

This sequence belongs to the ATPase alpha/beta chains family. As to quaternary structure, F-type ATPases have 2 components, CF(1) - the catalytic core - and CF(0) - the membrane proton channel. CF(1) has five subunits: alpha(3), beta(3), gamma(1), delta(1), epsilon(1). CF(0) has three main subunits: a(1), b(2) and c(9-12). The alpha and beta chains form an alternating ring which encloses part of the gamma chain. CF(1) is attached to CF(0) by a central stalk formed by the gamma and epsilon chains, while a peripheral stalk is formed by the delta and b chains.

Its subcellular location is the cell membrane. It carries out the reaction ATP + H2O + 4 H(+)(in) = ADP + phosphate + 5 H(+)(out). Its function is as follows. Produces ATP from ADP in the presence of a proton gradient across the membrane. The catalytic sites are hosted primarily by the beta subunits. This chain is ATP synthase subunit beta, found in Bacillus cytotoxicus (strain DSM 22905 / CIP 110041 / 391-98 / NVH 391-98).